The chain runs to 299 residues: Oxygen-dependent coproporphyrinogen-III oxidase (299 aa).

Residue Ser-92 participates in substrate binding. 2 residues coordinate a divalent metal cation: His-96 and His-106. The Proton donor role is filled by His-106. Residue 108–110 (NVR) participates in substrate binding. Positions 145 and 175 each coordinate a divalent metal cation. The interval 239–274 (YVEFNLVYDRGTLFGLQSGGRAESILMSLPPRVRWE) is important for dimerization. A substrate-binding site is contributed by 257–259 (GGR).

It belongs to the aerobic coproporphyrinogen-III oxidase family. In terms of assembly, homodimer. A divalent metal cation is required as a cofactor.

The protein resides in the cytoplasm. It catalyses the reaction coproporphyrinogen III + O2 + 2 H(+) = protoporphyrinogen IX + 2 CO2 + 2 H2O. Its pathway is porphyrin-containing compound metabolism; protoporphyrin-IX biosynthesis; protoporphyrinogen-IX from coproporphyrinogen-III (O2 route): step 1/1. Functionally, involved in the heme biosynthesis. Catalyzes the aerobic oxidative decarboxylation of propionate groups of rings A and B of coproporphyrinogen-III to yield the vinyl groups in protoporphyrinogen-IX. The sequence is that of Oxygen-dependent coproporphyrinogen-III oxidase from Xanthomonas euvesicatoria pv. vesicatoria (strain 85-10) (Xanthomonas campestris pv. vesicatoria).